We begin with the raw amino-acid sequence, 266 residues long: UPF0354 protein lmo1608 (266 aa).

It belongs to the UPF0354 family.

This Listeria monocytogenes serovar 1/2a (strain ATCC BAA-679 / EGD-e) protein is UPF0354 protein lmo1608.